The following is a 149-amino-acid chain: 3-dehydroquinate dehydratase (149 aa).

Tyrosine 26 serves as the catalytic Proton acceptor. The substrate site is built by asparagine 77, histidine 83, and aspartate 90. Histidine 103 acts as the Proton donor in catalysis. Residues 104 to 105 and arginine 114 contribute to the substrate site; that span reads LS.

The protein belongs to the type-II 3-dehydroquinase family. Homododecamer.

It carries out the reaction 3-dehydroquinate = 3-dehydroshikimate + H2O. The protein operates within metabolic intermediate biosynthesis; chorismate biosynthesis; chorismate from D-erythrose 4-phosphate and phosphoenolpyruvate: step 3/7. In terms of biological role, catalyzes a trans-dehydration via an enolate intermediate. This is 3-dehydroquinate dehydratase from Aliivibrio fischeri (strain MJ11) (Vibrio fischeri).